A 603-amino-acid polypeptide reads, in one-letter code: Nuclear receptor subfamily 2 group C member 1 (603 aa).

The tract at residues 1–178 (MATIEEIAHQ…RLQRCIAFGM (178 aa)) is required for interaction with KAT2B. Positions 110 to 185 (FDLCVVCGDK…FGMKQDSVQC (76 aa)) form a DNA-binding region, nuclear receptor. 2 NR C4-type zinc fingers span residues 113–133 (CVVC…CEGC) and 149–173 (CRGS…LQRC). Phosphoserine is present on residues S197 and S215. Position 220 is a phosphothreonine (T220). T222 carries the phosphothreonine; by MAPK1 modification. Residue K250 forms a Glycyl lysine isopeptide (Lys-Gly) (interchain with G-Cter in SUMO2) linkage. The NR LBD domain occupies 348–590 (GSVHLITGDS…SVIPHILKME (243 aa)). The residue at position 581 (S581) is a Phosphoserine; by PKC. The segment at 584-603 (PHILKMEPADYNSQIIGHSI) is required for interaction with NRIP1. K588 is covalently cross-linked (Glycyl lysine isopeptide (Lys-Gly) (interchain with G-Cter in SUMO2)).

It belongs to the nuclear hormone receptor family. NR2 subfamily. As to quaternary structure, homodimer. Heterodimer; binds DNA as a heterodimer with NR2C2 required for chromatin remodeling and for binding to promoter regions such as globin DR1 repeats. Interacts with NRIP1 (via its LXXLL motifs); the interaction provides corepressor activity. Interacts with HDAC3 (via the DNA-binding domain). Interacts with HDAC4 (via the DNA-binding domain). Interacts with PIAS1; the interaction is required for sumoylation of NR2C1. Interacts with UBE2I; the interaction is required for sumoylation of NR2C1. Interacts with KAT2B; the interaction acts as a corepressor of gene expression. Interacts with ESR1; the interaction prevents homodimerization of ESR1 and suppresses its transcriptional activity and cell growth. In terms of processing, sumoylation requires both PIAS1 and UBE2I. Sumoylation appears to dissociate NR2C1 from the PML nuclear bodies. Enhances the interaction with NRIP1 but inhibits interaction with KAT2B. In proliferating cells, stimulation by all-trans retinoic acid, activation of MAPK1-mediated phosphorylation and recruitment to PML bodies with subsequent sumoylation, suppresses OCT4 expression. Phosphorylated on several serine and threonine residues. Phosphorylation on Thr-222, stimulated by all-trans retinoic acid (atRA) mediates PML location and sumoylation in proliferating cells which then modulates its association with effector molecules, KAT2B and NRIP1. Phosphorylation on Ser-581 by PKC is important for protein stability and function as activator of RARB.

It is found in the nucleus. The protein resides in the PML body. Orphan nuclear receptor. Binds the IR7 element in the promoter of its own gene in an autoregulatory negative feedback mechanism. Primarily repressor of a broad range of genes. Binds to hormone response elements (HREs) consisting of two 5'-AGGTCA-3' half site direct repeat consensus sequences. Together with NR2C2, forms the core of the DRED (direct repeat erythroid-definitive) complex that represses embryonic and fetal globin transcription. Also activator of OCT4 gene expression. May be involved in stem cell proliferation and differentiation. Mediator of retinoic acid-regulated preadipocyte proliferation. The sequence is that of Nuclear receptor subfamily 2 group C member 1 (NR2C1) from Homo sapiens (Human).